A 205-amino-acid chain; its full sequence is MDIMKDKIRQALSELDILATEVQIDQWLDYLKLLEKWNKVYNMTAIKNIDEMLVKHLFDSLAVAKYIKGDSTVDVGTGGGLPGVVLAILYPQHQFTLVDSVGKKIMFLKNVKKSLSLNNINPLNTRIENLEGNFDNIISRAFSSVDTFYELCKHFLTEHNQMLAMKGRDLEERNLESLHLNIEKYSIKVPFLNAERNLIVIRKKL.

S-adenosyl-L-methionine is bound by residues Gly76, Leu81, 127-128, and Arg140; that span reads IE.

This sequence belongs to the methyltransferase superfamily. RNA methyltransferase RsmG family.

The protein resides in the cytoplasm. The enzyme catalyses guanosine(527) in 16S rRNA + S-adenosyl-L-methionine = N(7)-methylguanosine(527) in 16S rRNA + S-adenosyl-L-homocysteine. Functionally, specifically methylates the N7 position of guanine in position 527 of 16S rRNA. In Francisella tularensis subsp. tularensis (strain WY96-3418), this protein is Ribosomal RNA small subunit methyltransferase G.